The chain runs to 258 residues: MPESRTSADGGMETSYGFREVPGGEKQDLVNQVFHKVAKRYDIMNDVMSMGMHRAWKDAMISALNPRKEPGYRVLDVAGGTGDIAFRIVEASGRQAHATVLDINGSMLGVGAERAEKKKLSGNLTFVEANAEELPFEPASFDAYTIAFGIRNVPRIDAALSEAYRVLKRGGRLLVLEFSEVDMPLLDRIYDAWSFNAIPQFGKAITGDAEPYQYLVESIRKFPNQENFAAMIRQAGFSRVTYTNYTGGIAALHSGWKL.

Residues 1–21 are disordered; sequence MPESRTSADGGMETSYGFREV. Residues Thr-81, Asp-102, and 130-131 contribute to the S-adenosyl-L-methionine site; that span reads NA.

It belongs to the class I-like SAM-binding methyltransferase superfamily. MenG/UbiE family.

The catalysed reaction is a 2-demethylmenaquinol + S-adenosyl-L-methionine = a menaquinol + S-adenosyl-L-homocysteine + H(+). The enzyme catalyses a 2-methoxy-6-(all-trans-polyprenyl)benzene-1,4-diol + S-adenosyl-L-methionine = a 5-methoxy-2-methyl-3-(all-trans-polyprenyl)benzene-1,4-diol + S-adenosyl-L-homocysteine + H(+). It functions in the pathway quinol/quinone metabolism; menaquinone biosynthesis; menaquinol from 1,4-dihydroxy-2-naphthoate: step 2/2. The protein operates within cofactor biosynthesis; ubiquinone biosynthesis. Functionally, methyltransferase required for the conversion of demethylmenaquinol (DMKH2) to menaquinol (MKH2) and the conversion of 2-polyprenyl-6-methoxy-1,4-benzoquinol (DDMQH2) to 2-polyprenyl-3-methyl-6-methoxy-1,4-benzoquinol (DMQH2). This chain is Ubiquinone/menaquinone biosynthesis C-methyltransferase UbiE, found in Rhizobium leguminosarum bv. trifolii (strain WSM2304).